A 193-amino-acid chain; its full sequence is Sarcoplasmic calcium-binding protein (193 aa).

EF-hand domains lie at 16-40 (MYDI…NTLI), 57-92 (IMSN…LCCG), and 101-136 (CFKT…RSAF). Ca(2+) contacts are provided by Asp-18, Asp-20, Asn-22, Tyr-24, Asp-29, Asp-70, Asn-72, Asp-74, Gln-76, Glu-81, Asp-114, Asn-116, Asp-118, and Glu-125.

Monomer and dimer. Skeletal muscle (at protein level).

Functionally, like parvalbumins, SCPs seem to be more abundant in fast contracting muscles, but no functional relationship can be established from this distribution. This is Sarcoplasmic calcium-binding protein from Scylla paramamosain (Mud crab).